The sequence spans 1106 residues: Carbamoyl phosphate synthase large chain (1106 aa).

The carboxyphosphate synthetic domain stretch occupies residues M1–E402. 12 residues coordinate ATP: R129, R169, G175, G176, E208, I210, E215, G241, V242, H243, Q285, and E299. An ATP-grasp 1 domain is found at K133–L328. Mg(2+) is bound by residues Q285, E299, and N301. Mn(2+)-binding residues include Q285, E299, and N301. Residues Q403–T550 form an oligomerization domain region. The tract at residues E551 to G953 is carbamoyl phosphate synthetic domain. The ATP-grasp 2 domain occupies A681–T872. ATP is bound by residues R717, K756, L758, E763, G788, I789, H790, S791, Q831, and E843. Q831, E843, and N845 together coordinate Mg(2+). Mn(2+) contacts are provided by Q831, E843, and N845. The 153-residue stretch at G954 to D1106 folds into the MGS-like domain. Positions G954–D1106 are allosteric domain.

It belongs to the CarB family. In terms of assembly, composed of two chains; the small (or glutamine) chain promotes the hydrolysis of glutamine to ammonia, which is used by the large (or ammonia) chain to synthesize carbamoyl phosphate. Tetramer of heterodimers (alpha,beta)4. It depends on Mg(2+) as a cofactor. Requires Mn(2+) as cofactor.

It carries out the reaction hydrogencarbonate + L-glutamine + 2 ATP + H2O = carbamoyl phosphate + L-glutamate + 2 ADP + phosphate + 2 H(+). It catalyses the reaction hydrogencarbonate + NH4(+) + 2 ATP = carbamoyl phosphate + 2 ADP + phosphate + 2 H(+). It functions in the pathway amino-acid biosynthesis; L-arginine biosynthesis; carbamoyl phosphate from bicarbonate: step 1/1. It participates in pyrimidine metabolism; UMP biosynthesis via de novo pathway; (S)-dihydroorotate from bicarbonate: step 1/3. Large subunit of the glutamine-dependent carbamoyl phosphate synthetase (CPSase). CPSase catalyzes the formation of carbamoyl phosphate from the ammonia moiety of glutamine, carbonate, and phosphate donated by ATP, constituting the first step of 2 biosynthetic pathways, one leading to arginine and/or urea and the other to pyrimidine nucleotides. The large subunit (synthetase) binds the substrates ammonia (free or transferred from glutamine from the small subunit), hydrogencarbonate and ATP and carries out an ATP-coupled ligase reaction, activating hydrogencarbonate by forming carboxy phosphate which reacts with ammonia to form carbamoyl phosphate. In Kocuria rhizophila (strain ATCC 9341 / DSM 348 / NBRC 103217 / DC2201), this protein is Carbamoyl phosphate synthase large chain.